A 362-amino-acid chain; its full sequence is MIHIENLSKTYATPHGRFEALRGINLHIQQGEVFGIIGPSGAGKSTLVQCINLLERPDQGSIAIGGQALVGLGEAQLRNQRRRIGMVFQGFNLLARRTVYGNVALPLEIAGVARAEIPARVERLLALVGLEHLRDRYPSQISGGQKQRVGIARALANDPDVLLSDEATSALDPETTHNILALLRDINRKTGVTVVMITHQMEVVREICDRVAVLSHGEVVELGSTREVFAAPRHEVTRAMVSAATASDLSEATLAAVKQRIDALAAAEPGRAVRLWRLSLKGVAAGEPLWSDLAREFALDVSLVQARVEDIQGVAVGTLFVLAQGAPHAVKDALAALAAREITVEEIAHEPATDRSAYHVAA.

The 240-residue stretch at 2 to 241 (IHIENLSKTY…PRHEVTRAMV (240 aa)) folds into the ABC transporter domain. 38-45 (GPSGAGKS) is an ATP binding site.

It belongs to the ABC transporter superfamily. Methionine importer (TC 3.A.1.24) family. As to quaternary structure, the complex is composed of two ATP-binding proteins (MetN), two transmembrane proteins (MetI) and a solute-binding protein (MetQ).

Its subcellular location is the cell inner membrane. The catalysed reaction is L-methionine(out) + ATP + H2O = L-methionine(in) + ADP + phosphate + H(+). It carries out the reaction D-methionine(out) + ATP + H2O = D-methionine(in) + ADP + phosphate + H(+). Its function is as follows. Part of the ABC transporter complex MetNIQ involved in methionine import. Responsible for energy coupling to the transport system. The protein is Methionine import ATP-binding protein MetN of Bordetella bronchiseptica (strain ATCC BAA-588 / NCTC 13252 / RB50) (Alcaligenes bronchisepticus).